A 358-amino-acid chain; its full sequence is Peptide chain release factor 1 (358 aa).

Residue Q233 is modified to N5-methylglutamine.

It belongs to the prokaryotic/mitochondrial release factor family. Post-translationally, methylated by PrmC. Methylation increases the termination efficiency of RF1.

It localises to the cytoplasm. Peptide chain release factor 1 directs the termination of translation in response to the peptide chain termination codons UAG and UAA. This is Peptide chain release factor 1 from Listeria monocytogenes serotype 4b (strain CLIP80459).